The primary structure comprises 983 residues: MMARRTVDFKKLIEQLRARATDKAEALNTVSQLEIGAVDAQDVTASAVRAFVGALPSSGYHFGFVRQNVVFYLLSHATVQTARDPLYAAEQLHEQLDRFLRHQHDGGGDEDRLPFYHNGATLTAFQKLLQTLREIQTVIAEQSGGTAAAADLIASNNASTERRGKKGGSSSGGQQPLVRRVITQLETAATEARPYVNCRAVAELLDLTYQRLIYWACTLMPYVLFRRDTDTELDTVLLMHFFYTHYRSVNGDLAVEFQNYVKNSVRHMSSFVSSDIDGDQKPGAEHMRDVSYKLFVGNLQARDASGLMFPIISTRISTVNLYLSPERMFFHPGLISRLLSEEVSPRANLDAYARVCDRVLEDHLHTPRRVQRLLDLTQMVMRLVELGFNHDTCAAYAQMALIQPASQKSSLFVSEIREKLIQIIYNFYTFFMCLYVYSPTFLFDHRRRLILEQHRSTLIGSKEELQHVWSNVTLNVNTHFAVQYTEEDFEAHTKGATEAEREYLYRDLHSKWGVHLFTLRPSRGAAGAASPLPPLDGVTRSDILRECALVNLNEGRVNYASLLAFSHHPEFPSIFAQLVVVTEFSEIFGIPQGLFQAVGSPRLFALIQLCRVLLPEQVTLYQNLVSIYNLTTFVKHIDAAVFKTVRDCVFDIATTLEHLSGVPVTPNVDLLAELMARSVAHNLYTTVNPLIEDVMRSSAGSLRNYLRHTRLCFGLARGRARLSEDGVTVYVEVQGQYGLRVPTTRFVEQLRELVRRDRLLAENLRGLNERLLSVRVRVRQISSDTEEVSRHAKGHRTVAQMSKALKKTASKIKMLETRVTLALEQAQRSNGAVVTAVQRALAVFDVLSRENLERRGAQLCLTEATSLLHRHRALAPMTWPAGTGVAAAAEADGALREFLEAPWESAPQPPRLRMTPDTDHEESTAGATSVPEVLGARYEPAHLAASDLLNWYIVPVSQAQQDILSSIDPPAGSTSVSLPPASP.

Residues 474 to 983 (LNVNTHFAVQ…TSVSLPPASP (510 aa)) form an interaction with large tegument protein region. The interval 902–932 (PWESAPQPPRLRMTPDTDHEESTAGATSVPE) is disordered. Basic and acidic residues predominate over residues 914 to 923 (MTPDTDHEES).

It belongs to the herpesviridae inner tegument protein family. In terms of assembly, interacts (via C-terminus) with the large tegument protein/LTP (via N-terminus).

It localises to the virion tegument. The protein localises to the host cytoplasm. The protein resides in the host nucleus. Its subcellular location is the host Golgi apparatus. It is found in the host trans-Golgi network. Functionally, plays an essential role in cytoplasmic secondary envelopment during viral egress. Interacts with the capsid via the large tegument protein/LTP and participates in its transport to the host trans-Golgi network (TGN) where secondary envelopment occurs. Modulates tegumentation and capsid accumulation at the viral assembly complex. The polypeptide is Inner tegument protein (UL47) (Homo sapiens (Human)).